The following is a 297-amino-acid chain: Phosphoribosylaminoimidazole-succinocarboxamide synthase (297 aa).

It belongs to the SAICAR synthetase family.

It catalyses the reaction 5-amino-1-(5-phospho-D-ribosyl)imidazole-4-carboxylate + L-aspartate + ATP = (2S)-2-[5-amino-1-(5-phospho-beta-D-ribosyl)imidazole-4-carboxamido]succinate + ADP + phosphate + 2 H(+). Its pathway is purine metabolism; IMP biosynthesis via de novo pathway; 5-amino-1-(5-phospho-D-ribosyl)imidazole-4-carboxamide from 5-amino-1-(5-phospho-D-ribosyl)imidazole-4-carboxylate: step 1/2. This is Phosphoribosylaminoimidazole-succinocarboxamide synthase from Mycobacterium ulcerans (strain Agy99).